The sequence spans 330 residues: Global transcription regulator sge1 (330 aa).

2 disordered regions span residues 93-123 (PPGE…RNSV) and 239-306 (QYAP…HQPQ). Residues 105 to 114 (GKSTTQSGGI) are compositionally biased toward polar residues. Residues 250–306 (QQPALQQQPQQQPQPQHQPQLQYQPQPHQHQPQLQYQPQQQHQPQQQYRPQPQHQPQ) show a composition bias toward low complexity.

Belongs to the MIT1/WOR1 family.

The protein localises to the nucleus. In terms of biological role, global transcriptional regulator of pathogenicity. Acts as an activator of parasitic growth. Not essential for colonization or penetration of the root surface, but required for expression of genes encoding effectors that are secreted during infection. Involved in conidiogenesis, but is not required for conidial fitness, overall (colony) morphology, vegetative growth or carbon source utilization. In Fusarium oxysporum f. sp. lycopersici (strain 4287 / CBS 123668 / FGSC 9935 / NRRL 34936) (Fusarium vascular wilt of tomato), this protein is Global transcription regulator sge1.